The chain runs to 180 residues: Large ribosomal subunit protein uL6 (180 aa).

The protein belongs to the universal ribosomal protein uL6 family. As to quaternary structure, part of the 50S ribosomal subunit.

This protein binds to the 23S rRNA, and is important in its secondary structure. It is located near the subunit interface in the base of the L7/L12 stalk, and near the tRNA binding site of the peptidyltransferase center. This is Large ribosomal subunit protein uL6 from Anaeromyxobacter sp. (strain K).